A 551-amino-acid chain; its full sequence is MEREYMEFDVVIVGAGPAGLSAACRLKQKAAEAGQEISVCVVEKGSEVGAHILSGAVFEPRALNELFPDWKELGAPLNTPVTGDDIYVLKSAESATKVPNFFVPKTMHNEGNYIISLGNLCRWLAQQAEGLGVEIYPGFAAQEALIDENGVVRGIVTGDLGVDREGNPKEGYYTPGMELRAKYTLFAEGCRGHIGKQLIKKYNLDSEADAQHYGIGIKEIWDIDPSKHKPGLVVHTAGWPLNDENTGGSFLYHLENNQVFVGLIIDLSYSNPHLSPFDEFQRYKHHPVVKQYLEGGKRVAYGARAICKGGLNSLPKMVFPGGALIGCDLGTLNFAKIKGSHTAMKSGMLAADAIAEALAAGREGGDELSSYVDAFKASWLYDELFRSRNFGAAIHKFGAIGGGAFNFIDQNIFGGKIPVTLHDDKPDYACLKKASEAPKIDYPKPDGKLSFDKLSSVFLSNTNHEEDQPIHLKLADASIPIEKNLPLYDEPAQRYCPAGVYEVVANDDGSKRFQINAQNCVHCKTCDIKDPAQNITWVAPEGTGGPNYPNM.

FAD is bound at residue 10 to 24 (VVIVGAGPAGLSAAC). [4Fe-4S] cluster is bound by residues Cys496, Cys520, Cys523, and Cys526. In terms of domain architecture, 4Fe-4S ferredoxin-type spans 511 to 540 (KRFQINAQNCVHCKTCDIKDPAQNITWVAP).

This sequence belongs to the ETF-QO/FixC family. The cofactor is [4Fe-4S] cluster. Requires FAD as cofactor.

It carries out the reaction a ubiquinone + reduced [electron-transfer flavoprotein] = a ubiquinol + oxidized [electron-transfer flavoprotein] + H(+). Accepts electrons from ETF and reduces ubiquinone. The chain is Electron transfer flavoprotein-ubiquinone oxidoreductase from Pseudomonas aeruginosa (strain ATCC 15692 / DSM 22644 / CIP 104116 / JCM 14847 / LMG 12228 / 1C / PRS 101 / PAO1).